The primary structure comprises 699 residues: Elongation factor G 2 (699 aa).

The tr-type G domain occupies 8–290; sequence ERYRNIGICA…AVIEYLPSPT (283 aa). Residues 17 to 24, 88 to 92, and 142 to 145 contribute to the GTP site; these read AHVDAGKT, DTPGH, and NKMD.

The protein belongs to the TRAFAC class translation factor GTPase superfamily. Classic translation factor GTPase family. EF-G/EF-2 subfamily.

It localises to the cytoplasm. Functionally, catalyzes the GTP-dependent ribosomal translocation step during translation elongation. During this step, the ribosome changes from the pre-translocational (PRE) to the post-translocational (POST) state as the newly formed A-site-bound peptidyl-tRNA and P-site-bound deacylated tRNA move to the P and E sites, respectively. Catalyzes the coordinated movement of the two tRNA molecules, the mRNA and conformational changes in the ribosome. The protein is Elongation factor G 2 of Colwellia psychrerythraea (strain 34H / ATCC BAA-681) (Vibrio psychroerythus).